The chain runs to 549 residues: Cytoplasmic trehalase (549 aa).

Substrate-binding positions include arginine 168, 175 to 176 (WD), asparagine 212, 221 to 223 (RSQ), 292 to 294 (RDE), and glycine 324. Residues aspartate 326 and glutamate 509 each act as proton donor/acceptor in the active site. Glutamate 525 contributes to the substrate binding site.

Belongs to the glycosyl hydrolase 37 family. In terms of assembly, monomer.

Its subcellular location is the cytoplasm. It carries out the reaction alpha,alpha-trehalose + H2O = alpha-D-glucose + beta-D-glucose. The protein operates within glycan degradation; trehalose degradation; D-glucose from alpha,alpha-trehalose: step 1/1. In terms of biological role, hydrolyzes trehalose to glucose. Could be involved, in cells returning to low osmolarity conditions, in the utilization of the accumulated cytoplasmic trehalose, which was synthesized in response to high osmolarity. The polypeptide is Cytoplasmic trehalase (Salmonella choleraesuis (strain SC-B67)).